The primary structure comprises 668 residues: Major S-layer protein (668 aa).

The N-terminal stretch at methionine 1–alanine 24 is a signal peptide. Residues asparagine 36, asparagine 65, asparagine 111, asparagine 265, asparagine 583, asparagine 596, asparagine 602, asparagine 608, asparagine 617, and asparagine 635 are each glycosylated (N-linked (GlcNAc...) asparagine). The disordered stretch occupies residues glutamate 584 to valine 650. The segment covering asparagine 596–serine 611 has biased composition (polar residues). Acidic residues predominate over residues glutamate 631–glutamate 641. Residues glycine 644–valine 664 form a helical membrane-spanning segment.

The protein belongs to the Methanosarcinales S-layer protein family. Post-translationally, glycosylated.

The protein resides in the secreted. It is found in the cell wall. Its subcellular location is the S-layer. The protein localises to the cell membrane. Functionally, S-layer protein. The S-layer is a paracrystalline mono-layered assembly of proteins which coat the surface of the cell. The polypeptide is Major S-layer protein (Methanosarcina barkeri (strain Fusaro / DSM 804)).